Consider the following 367-residue polypeptide: 3-isopropylmalate dehydrogenase (367 aa).

77-90 is a binding site for NAD(+); sequence GPKWDAVPYEVRPE. Substrate-binding residues include arginine 97, arginine 107, arginine 135, and aspartate 226. Mg(2+) is bound by residues aspartate 226, aspartate 250, and aspartate 254. NAD(+) is bound at residue 290–302; the sequence is GSAPDIAGKGIAN.

The protein belongs to the isocitrate and isopropylmalate dehydrogenases family. LeuB type 1 subfamily. Homodimer. Requires Mg(2+) as cofactor. It depends on Mn(2+) as a cofactor.

Its subcellular location is the cytoplasm. It catalyses the reaction (2R,3S)-3-isopropylmalate + NAD(+) = 4-methyl-2-oxopentanoate + CO2 + NADH. It participates in amino-acid biosynthesis; L-leucine biosynthesis; L-leucine from 3-methyl-2-oxobutanoate: step 3/4. Catalyzes the oxidation of 3-carboxy-2-hydroxy-4-methylpentanoate (3-isopropylmalate) to 3-carboxy-4-methyl-2-oxopentanoate. The product decarboxylates to 4-methyl-2 oxopentanoate. The polypeptide is 3-isopropylmalate dehydrogenase (Mesorhizobium japonicum (strain LMG 29417 / CECT 9101 / MAFF 303099) (Mesorhizobium loti (strain MAFF 303099))).